The primary structure comprises 437 residues: MTTFSPREIVSELDRFIVGQKDAKRAVAIALRNRWRRQQLKGPLRDEVAPKNILMIGPTGCGKTEIARRLARLAGAPFLKIEATKFTEVGYVGRDVEQIVRDLVEVGIGLTREEKRKAVKAKAEAAAESRILDALVGPTASQATRESFRKKLRASELDDKEVEIELAPSGSQGLPMFEIPGMPGASMGAINISDMLGKALGGQRGKPRRITVAEAYAPLIAEESDKLVDDDALTREAIREVEDNGIVFLDEIDKICAREGRSGADVSREGVQRDLLPLIEGTTVATKHGPVKTDHILFIASGAFHVSKPSDLLPELQGRLPIRVELQPLTVEDFKQILTATEASLIKQTVALMETEGVTLDFTEDAIDALARVAVEVNGSVENIGARRLQTVLERVIDEISFTATDRSGETVPIDAAYVRDRVEDLAANADLSRFIL.

Residues Val-18, 60 to 65 (GCGKTE), Asp-250, Glu-315, and Arg-387 contribute to the ATP site.

This sequence belongs to the ClpX chaperone family. HslU subfamily. In terms of assembly, a double ring-shaped homohexamer of HslV is capped on each side by a ring-shaped HslU homohexamer. The assembly of the HslU/HslV complex is dependent on binding of ATP.

It localises to the cytoplasm. Its function is as follows. ATPase subunit of a proteasome-like degradation complex; this subunit has chaperone activity. The binding of ATP and its subsequent hydrolysis by HslU are essential for unfolding of protein substrates subsequently hydrolyzed by HslV. HslU recognizes the N-terminal part of its protein substrates and unfolds these before they are guided to HslV for hydrolysis. This is ATP-dependent protease ATPase subunit HslU from Methylorubrum extorquens (strain PA1) (Methylobacterium extorquens).